Reading from the N-terminus, the 368-residue chain is tRNA-specific 2-thiouridylase MnmA (368 aa).

ATP is bound by residues Gly-11–Ser-18 and Met-37. Residues Asn-97–Asp-99 form an interaction with target base in tRNA region. Catalysis depends on Cys-102, which acts as the Nucleophile. Cys-102 and Cys-199 are joined by a disulfide. Position 127 (Gly-127) interacts with ATP. The tract at residues Lys-149–Gln-151 is interaction with tRNA. The active-site Cysteine persulfide intermediate is the Cys-199. Residues Arg-311–Tyr-312 form an interaction with tRNA region.

It belongs to the MnmA/TRMU family. As to quaternary structure, interacts with TusE.

Its subcellular location is the cytoplasm. The catalysed reaction is S-sulfanyl-L-cysteinyl-[protein] + uridine(34) in tRNA + AH2 + ATP = 2-thiouridine(34) in tRNA + L-cysteinyl-[protein] + A + AMP + diphosphate + H(+). Functionally, catalyzes the 2-thiolation of uridine at the wobble position (U34) of tRNA(Lys), tRNA(Glu) and tRNA(Gln), leading to the formation of s(2)U34, the first step of tRNA-mnm(5)s(2)U34 synthesis. Sulfur is provided by IscS, via a sulfur-relay system. Binds ATP and its substrate tRNAs. This chain is tRNA-specific 2-thiouridylase MnmA, found in Escherichia coli O1:K1 / APEC.